A 447-amino-acid chain; its full sequence is Protein mab-21-like 4 (447 aa).

This Homo sapiens (Human) protein is Protein mab-21-like 4.